The chain runs to 70 residues: uncharacterized protein (70 aa).

This is an uncharacterized protein from Haloarcula hispanica (His1V).